A 474-amino-acid chain; its full sequence is ABHD16B (474 aa).

The AB hydrolase-1 domain occupies 175–295; sequence VICCEGNAGF…QSWKGLVVRT (121 aa). Residues Ser248, Asp323, and His423 each act as charge relay system in the active site.

This sequence belongs to the AB hydrolase superfamily. ABHD16 family. Expressed in most tissues, with highest expression found in the testes, skeletal muscle, and brown adipose tissue.

The enzyme catalyses a 1,2-diacyl-sn-glycero-3-phospho-L-serine + H2O = a 2-acyl-sn-glycero-3-phospho-L-serine + a fatty acid + H(+). It carries out the reaction a 1-acylglycerol + H2O = glycerol + a fatty acid + H(+). The catalysed reaction is 1-(9Z-octadecenoyl)-glycerol + H2O = glycerol + (9Z)-octadecenoate + H(+). Its function is as follows. Hydrolyzes the sn-1 position of glycerophospholipids with high specificity towards phosphatidylserine (PS), PS-PLA1 enzyme. Also hydrolyzes the acyl chain of glycerolipids with a preference for the monoacylglycerol (MAG) 1-acylglycerol, MAG lipase. Plays a regulatory role in cellular lipid homeostasis by modulating genes involved in neutral lipid degradation and in phospholipid synthesis and composition. The polypeptide is ABHD16B (Mus musculus (Mouse)).